Consider the following 659-residue polypeptide: Protein phosphatase Slingshot homolog 3 (659 aa).

Residues 1–16 (MALVTVSRSPPGSGAS) show a composition bias toward polar residues. Residues 1–31 (MALVTVSRSPPGSGASTPVGPWDQAVQRRSR) are disordered. At alanine 2 the chain carries N-acetylalanine. 2 positions are modified to phosphoserine: serine 9 and serine 37. Positions 46 to 96 (LGLQDGGDNDDAAEASSEPTEKAPSEEELHGDQTDFGQGSQSPQKQEEQRQ) are disordered. Residues 64 to 78 (PTEKAPSEEELHGDQ) are compositionally biased toward basic and acidic residues. The segment covering 80-89 (DFGQGSQSPQ) has biased composition (polar residues). 2 positions are modified to phosphoserine: serine 85 and serine 87. The 56-residue stretch at 269–324 (EQMEQAIRAELWKVLDVSDLESVTSKEIRQALELRLGLPLQQYRDFIDNQMLLLVA) folds into the DEK-C domain. Residues 328–469 (RASRIFPHLY…LQIYQGILTA (142 aa)) enclose the Tyrosine-protein phosphatase domain. The Phosphocysteine intermediate role is filled by cysteine 413. Disordered stretches follow at residues 482-534 (GVSP…RINL), 547-603 (SLEL…RQSV), and 617-638 (QAFQEQEQGQGQGQGEPCISST). The span at 547 to 557 (SLELESTSETS) shows a compositional bias: low complexity.

It belongs to the protein-tyrosine phosphatase family. Does not bind to, or colocalize with, filamentous actin.

It is found in the cytoplasm. The protein localises to the cytoskeleton. The protein resides in the nucleus. It catalyses the reaction O-phospho-L-tyrosyl-[protein] + H2O = L-tyrosyl-[protein] + phosphate. It carries out the reaction O-phospho-L-seryl-[protein] + H2O = L-seryl-[protein] + phosphate. The enzyme catalyses O-phospho-L-threonyl-[protein] + H2O = L-threonyl-[protein] + phosphate. Protein phosphatase which may play a role in the regulation of actin filament dynamics. Can dephosphorylate and activate the actin binding/depolymerizing factor cofilin, which subsequently binds to actin filaments and stimulates their disassembly. This Homo sapiens (Human) protein is Protein phosphatase Slingshot homolog 3 (SSH3).